The sequence spans 838 residues: MPYDPTKIEPKWQAYWAGHHIFRVEIDPARPKFYALDMFPYPSGAGLHVGHPLGYTATDIMCRYKRMRGFNVLHPMGWDSFGLPAERHAMRTGVHPDITTKRNIETFRGQVQRLGFSYDWSREFATTDPAYVRWTQWIFLKLFENGLAYQAEVAVNWCPAQNAVLADEEVKDGRYVETGDPVIRRRMRQWMLRITAYADRLLQGLDGLDWPENLKAMQRNWIGRSEGAEIRFPLEHGKGVITVFTTRPETLFGASYILLAPEHPAVAAIVEPEMSEAVAAYIAEAEGLEETVRADAGREKTGVFTGAYAINPANGARLPVWVADYVLAGYGTGALMAVPAHDARDYAFAHSHELPIIRVIDSEADIEKGAYEGEGAMVNSGFLSGLGSPEARSAIVAWLQANGTGWPKVMYRLRDWLFSRQRYWGEPIPVLHLADGSVMPLPEECLPLLPPELDDYAPTPDGEPPLARAQAWVETIVPGTDIPARRETNTMPQWAGSCWYYLRFLDPENTSEPVGREAERYWMPVDLYVGGAEHAVLHLLYARFWHKVLYDIGVVSTEEPFQRLFNQGMILAHSYRDAAGRYYAPSSVVEEEGRWFAGSVEVQRAVEKMSKSQLNVVNPDDVVHQFGADALRLYEMFMGPLDAAKPWQTAGVIGVRRFLERAWRIVCDESDGLSPVVLEAAPSPQLLRLRHQTVKTVTADIEAIRFNTAVSRLMELANALTAEAARPREVVETFVLLLAPFAPHIAEELWSKLGHGETLTWVSWPTFDPALIEMETREYVVQINGKVRHRFEAAADLGEALLAAARSEPSVMALLDGKTVVKEVLVPGRLVNFVVEDL.

Residues 40-51 carry the 'HIGH' region motif; it reads PYPSGAGLHVGH. A 'KMSKS' region motif is present at residues 608–612; the sequence is KMSKS. ATP is bound at residue Lys611.

The protein belongs to the class-I aminoacyl-tRNA synthetase family.

It localises to the cytoplasm. It carries out the reaction tRNA(Leu) + L-leucine + ATP = L-leucyl-tRNA(Leu) + AMP + diphosphate. The protein is Leucine--tRNA ligase 1 of Rhizobium johnstonii (strain DSM 114642 / LMG 32736 / 3841) (Rhizobium leguminosarum bv. viciae).